A 329-amino-acid polypeptide reads, in one-letter code: Phenylalanine--tRNA ligase alpha subunit (329 aa).

Mg(2+) is bound at residue Glu254.

This sequence belongs to the class-II aminoacyl-tRNA synthetase family. Phe-tRNA synthetase alpha subunit type 1 subfamily. In terms of assembly, tetramer of two alpha and two beta subunits. The cofactor is Mg(2+).

It localises to the cytoplasm. It catalyses the reaction tRNA(Phe) + L-phenylalanine + ATP = L-phenylalanyl-tRNA(Phe) + AMP + diphosphate + H(+). The protein is Phenylalanine--tRNA ligase alpha subunit of Actinobacillus succinogenes (strain ATCC 55618 / DSM 22257 / CCUG 43843 / 130Z).